The chain runs to 540 residues: Exopolysaccharide phosphotransferase SCO6022 (540 aa).

It belongs to the stealth family.

The polypeptide is Exopolysaccharide phosphotransferase SCO6022 (Streptomyces coelicolor (strain ATCC BAA-471 / A3(2) / M145)).